We begin with the raw amino-acid sequence, 612 residues long: Arginine--tRNA ligase (612 aa).

Positions 152 to 162 match the 'HIGH' region motif; the sequence is PNIAKEMHVGH.

This sequence belongs to the class-I aminoacyl-tRNA synthetase family. Monomer.

The protein resides in the cytoplasm. It carries out the reaction tRNA(Arg) + L-arginine + ATP = L-arginyl-tRNA(Arg) + AMP + diphosphate. The sequence is that of Arginine--tRNA ligase from Prochlorococcus marinus (strain MIT 9313).